We begin with the raw amino-acid sequence, 353 residues long: uncharacterized protein (353 aa).

The signal sequence occupies residues 1-24 (MRVVERAVIACYLGITIFSGIAFG).

The protein belongs to the chlamydial CPn_1058/CT_355/TC_0634 family.

This is an uncharacterized protein from Chlamydia trachomatis serovar D (strain ATCC VR-885 / DSM 19411 / UW-3/Cx).